The following is a 233-amino-acid chain: Putative glutathione peroxidase 7, chloroplastic (233 aa).

The transit peptide at 1-69 directs the protein to the chloroplast; it reads MAFSYASFST…KSKNFSVYAR (69 aa). Cys108 is an active-site residue.

Belongs to the glutathione peroxidase family.

It is found in the plastid. Its subcellular location is the chloroplast. It catalyses the reaction 2 glutathione + H2O2 = glutathione disulfide + 2 H2O. Its function is as follows. May constitute a glutathione peroxidase-like protective system against oxidative stresses. The chain is Putative glutathione peroxidase 7, chloroplastic (GPX7) from Arabidopsis thaliana (Mouse-ear cress).